Here is a 645-residue protein sequence, read N- to C-terminus: Threonine--tRNA ligase (645 aa).

The 63-residue stretch at 1-63 (MEQINIQFPD…ETDGSIEIVT (63 aa)) folds into the TGS domain. The tract at residues 242–540 (DHRKIGKELE…LTEETKGAFP (299 aa)) is catalytic. Residues C336, H387, and H517 each contribute to the Zn(2+) site.

It belongs to the class-II aminoacyl-tRNA synthetase family. Homodimer. The cofactor is Zn(2+).

Its subcellular location is the cytoplasm. The enzyme catalyses tRNA(Thr) + L-threonine + ATP = L-threonyl-tRNA(Thr) + AMP + diphosphate + H(+). Catalyzes the attachment of threonine to tRNA(Thr) in a two-step reaction: L-threonine is first activated by ATP to form Thr-AMP and then transferred to the acceptor end of tRNA(Thr). Also edits incorrectly charged L-seryl-tRNA(Thr). In Staphylococcus aureus (strain NCTC 8325 / PS 47), this protein is Threonine--tRNA ligase.